A 163-amino-acid polypeptide reads, in one-letter code: Phosphopantetheine adenylyltransferase (163 aa).

Substrate is bound at residue Ser11. Residues 11 to 12 (SF) and His19 contribute to the ATP site. Substrate is bound by residues Lys43, Ala76, and Arg90. ATP-binding positions include 91–93 (GLR), Glu101, and 126–132 (WQALSSS).

Belongs to the bacterial CoaD family. Homohexamer. Mg(2+) serves as cofactor.

It is found in the cytoplasm. The catalysed reaction is (R)-4'-phosphopantetheine + ATP + H(+) = 3'-dephospho-CoA + diphosphate. It functions in the pathway cofactor biosynthesis; coenzyme A biosynthesis; CoA from (R)-pantothenate: step 4/5. Its function is as follows. Reversibly transfers an adenylyl group from ATP to 4'-phosphopantetheine, yielding dephospho-CoA (dPCoA) and pyrophosphate. The protein is Phosphopantetheine adenylyltransferase of Streptococcus pyogenes serotype M2 (strain MGAS10270).